Here is a 386-residue protein sequence, read N- to C-terminus: S-adenosylmethionine synthase (386 aa).

ATP is bound at residue H16. A Mg(2+)-binding site is contributed by D18. E44 provides a ligand contact to K(+). Residues E57 and Q100 each coordinate L-methionine. Residues 100 to 110 (QSPDINQGVDR) form a flexible loop region. Residues 164-166 (DGK), 230-231 (KF), D239, 245-246 (RK), A262, and K266 each bind ATP. D239 is a binding site for L-methionine. Position 270 (K270) interacts with L-methionine.

It belongs to the AdoMet synthase family. As to quaternary structure, homotetramer; dimer of dimers. Mg(2+) is required as a cofactor. The cofactor is K(+).

The protein resides in the cytoplasm. It carries out the reaction L-methionine + ATP + H2O = S-adenosyl-L-methionine + phosphate + diphosphate. The protein operates within amino-acid biosynthesis; S-adenosyl-L-methionine biosynthesis; S-adenosyl-L-methionine from L-methionine: step 1/1. Catalyzes the formation of S-adenosylmethionine (AdoMet) from methionine and ATP. The overall synthetic reaction is composed of two sequential steps, AdoMet formation and the subsequent tripolyphosphate hydrolysis which occurs prior to release of AdoMet from the enzyme. This Helicobacter hepaticus (strain ATCC 51449 / 3B1) protein is S-adenosylmethionine synthase.